Reading from the N-terminus, the 336-residue chain is UDP-N-acetylenolpyruvoylglucosamine reductase (336 aa).

One can recognise an FAD-binding PCMH-type domain in the interval 17 to 188 (GFDVRARYAS…TAVTLRLSRD (172 aa)). R164 is a catalytic residue. S236 (proton donor) is an active-site residue. E332 is an active-site residue.

This sequence belongs to the MurB family. FAD is required as a cofactor.

Its subcellular location is the cytoplasm. The catalysed reaction is UDP-N-acetyl-alpha-D-muramate + NADP(+) = UDP-N-acetyl-3-O-(1-carboxyvinyl)-alpha-D-glucosamine + NADPH + H(+). It functions in the pathway cell wall biogenesis; peptidoglycan biosynthesis. Functionally, cell wall formation. This is UDP-N-acetylenolpyruvoylglucosamine reductase from Cupriavidus pinatubonensis (strain JMP 134 / LMG 1197) (Cupriavidus necator (strain JMP 134)).